We begin with the raw amino-acid sequence, 417 residues long: Serine hydroxymethyltransferase (417 aa).

(6S)-5,6,7,8-tetrahydrofolate is bound by residues Leu120 and 124-126 (GHL). Lys229 is subject to N6-(pyridoxal phosphate)lysine. Residue 354–356 (SPF) participates in (6S)-5,6,7,8-tetrahydrofolate binding.

Belongs to the SHMT family. In terms of assembly, homodimer. Requires pyridoxal 5'-phosphate as cofactor.

It localises to the cytoplasm. It catalyses the reaction (6R)-5,10-methylene-5,6,7,8-tetrahydrofolate + glycine + H2O = (6S)-5,6,7,8-tetrahydrofolate + L-serine. It functions in the pathway one-carbon metabolism; tetrahydrofolate interconversion. Its pathway is amino-acid biosynthesis; glycine biosynthesis; glycine from L-serine: step 1/1. Its function is as follows. Catalyzes the reversible interconversion of serine and glycine with tetrahydrofolate (THF) serving as the one-carbon carrier. This reaction serves as the major source of one-carbon groups required for the biosynthesis of purines, thymidylate, methionine, and other important biomolecules. Also exhibits THF-independent aldolase activity toward beta-hydroxyamino acids, producing glycine and aldehydes, via a retro-aldol mechanism. The sequence is that of Serine hydroxymethyltransferase from Acinetobacter radioresistens.